A 212-amino-acid polypeptide reads, in one-letter code: Transcription antitermination protein NusB (212 aa).

It belongs to the NusB family.

Involved in transcription antitermination. Required for transcription of ribosomal RNA (rRNA) genes. Binds specifically to the boxA antiterminator sequence of the ribosomal RNA (rrn) operons. This is Transcription antitermination protein NusB from Gloeothece citriformis (strain PCC 7424) (Cyanothece sp. (strain PCC 7424)).